We begin with the raw amino-acid sequence, 105 residues long: Pyrimidine/purine nucleoside phosphorylase (105 aa).

It belongs to the nucleoside phosphorylase PpnP family.

It catalyses the reaction a purine D-ribonucleoside + phosphate = a purine nucleobase + alpha-D-ribose 1-phosphate. The enzyme catalyses adenosine + phosphate = alpha-D-ribose 1-phosphate + adenine. The catalysed reaction is cytidine + phosphate = cytosine + alpha-D-ribose 1-phosphate. It carries out the reaction guanosine + phosphate = alpha-D-ribose 1-phosphate + guanine. It catalyses the reaction inosine + phosphate = alpha-D-ribose 1-phosphate + hypoxanthine. The enzyme catalyses thymidine + phosphate = 2-deoxy-alpha-D-ribose 1-phosphate + thymine. The catalysed reaction is uridine + phosphate = alpha-D-ribose 1-phosphate + uracil. It carries out the reaction xanthosine + phosphate = alpha-D-ribose 1-phosphate + xanthine. Catalyzes the phosphorolysis of diverse nucleosides, yielding D-ribose 1-phosphate and the respective free bases. Can use uridine, adenosine, guanosine, cytidine, thymidine, inosine and xanthosine as substrates. Also catalyzes the reverse reactions. The sequence is that of Pyrimidine/purine nucleoside phosphorylase from Delftia acidovorans (strain DSM 14801 / SPH-1).